The sequence spans 519 residues: ATP synthase subunit alpha 1 (519 aa).

172 to 179 (GDRQTGKT) contributes to the ATP binding site.

It belongs to the ATPase alpha/beta chains family. In terms of assembly, F-type ATPases have 2 components, CF(1) - the catalytic core - and CF(0) - the membrane proton channel. CF(1) has five subunits: alpha(3), beta(3), gamma(1), delta(1), epsilon(1). CF(0) has three main subunits: a(1), b(2) and c(9-12). The alpha and beta chains form an alternating ring which encloses part of the gamma chain. CF(1) is attached to CF(0) by a central stalk formed by the gamma and epsilon chains, while a peripheral stalk is formed by the delta and b chains.

It localises to the cell inner membrane. The enzyme catalyses ATP + H2O + 4 H(+)(in) = ADP + phosphate + 5 H(+)(out). In terms of biological role, produces ATP from ADP in the presence of a proton gradient across the membrane. The alpha chain is a regulatory subunit. The sequence is that of ATP synthase subunit alpha 1 from Psychromonas ingrahamii (strain DSM 17664 / CCUG 51855 / 37).